The chain runs to 164 residues: Nucleotide-binding protein Mfla_1706 (164 aa).

Belongs to the YajQ family.

Nucleotide-binding protein. The protein is Nucleotide-binding protein Mfla_1706 of Methylobacillus flagellatus (strain ATCC 51484 / DSM 6875 / VKM B-1610 / KT).